Consider the following 658-residue polypeptide: Endoplasmic reticulum mannosyl-oligosaccharide 1,2-alpha-mannosidase (658 aa).

At M1–N50 the chain is on the cytoplasmic side. Residues V51–A71 form a helical; Signal-anchor for type II membrane protein membrane-spanning segment. Over D72 to A658 the chain is Lumenal. Position 102 is a phosphoserine (S102). The segment at G123–D142 is disordered. E289 functions as the Proton donor in the catalytic mechanism. D422 is a catalytic residue. A disulfide bridge connects residues C486 and C515. The active-site Proton donor is E529. E558 is a catalytic residue. T647 is a binding site for Ca(2+).

This sequence belongs to the glycosyl hydrolase 47 family. The cofactor is Ca(2+).

It localises to the endoplasmic reticulum membrane. It catalyses the reaction N(4)-(alpha-D-Man-(1-&gt;2)-alpha-D-Man-(1-&gt;2)-alpha-D-Man-(1-&gt;3)-[alpha-D-Man-(1-&gt;2)-alpha-D-Man-(1-&gt;3)-[alpha-D-Man-(1-&gt;2)-alpha-D-Man-(1-&gt;6)]-alpha-D-Man-(1-&gt;6)]-beta-D-Man-(1-&gt;4)-beta-D-GlcNAc-(1-&gt;4)-beta-D-GlcNAc)-L-asparaginyl-[protein] (N-glucan mannose isomer 9A1,2,3B1,2,3) + 4 H2O = N(4)-(alpha-D-Man-(1-&gt;3)-[alpha-D-Man-(1-&gt;3)-[alpha-D-Man-(1-&gt;6)]-alpha-D-Man-(1-&gt;6)]-beta-D-Man-(1-&gt;4)-beta-D-GlcNAc-(1-&gt;4)-beta-D-GlcNAc)-L-asparaginyl-[protein] (N-glucan mannose isomer 5A1,2) + 4 beta-D-mannose. The catalysed reaction is N(4)-(alpha-D-Man-(1-&gt;2)-alpha-D-Man-(1-&gt;2)-alpha-D-Man-(1-&gt;3)-[alpha-D-Man-(1-&gt;3)-[alpha-D-Man-(1-&gt;2)-alpha-D-Man-(1-&gt;6)]-alpha-D-Man-(1-&gt;6)]-beta-D-Man-(1-&gt;4)-beta-D-GlcNAc-(1-&gt;4)-beta-D-GlcNAc)-L-asparaginyl-[protein] (N-glucan mannose isomer 8A1,2,3B1,3) + 3 H2O = N(4)-(alpha-D-Man-(1-&gt;3)-[alpha-D-Man-(1-&gt;3)-[alpha-D-Man-(1-&gt;6)]-alpha-D-Man-(1-&gt;6)]-beta-D-Man-(1-&gt;4)-beta-D-GlcNAc-(1-&gt;4)-beta-D-GlcNAc)-L-asparaginyl-[protein] (N-glucan mannose isomer 5A1,2) + 3 beta-D-mannose. It participates in protein modification; protein glycosylation. In terms of biological role, involved in glycoprotein quality control targeting of misfolded glycoproteins for degradation. It primarily trims a single alpha-1,2-linked mannose residue from Man(9)GlcNAc(2) to produce Man(8)GlcNAc(2), but at high enzyme concentrations, as found in the ER quality control compartment (ERQC), it further trims the carbohydrates to Man(5-6)GlcNAc(2). The chain is Endoplasmic reticulum mannosyl-oligosaccharide 1,2-alpha-mannosidase (Man1b1) from Mus musculus (Mouse).